A 2283-amino-acid polypeptide reads, in one-letter code: DNA polymerase epsilon catalytic subunit A (2283 aa).

Residues 1-32 are disordered; that stretch reads MVLRNSGRRHPEPGADGEGSRDDGPSSSVSAL. The segment covering 9–24 has biased composition (basic and acidic residues); the sequence is RHPEPGADGEGSRDDG. 3 positions are modified to phosphoserine: S1184, S1296, and S1316. Disordered regions lie at residues 1935 to 1968 and 2014 to 2041; these read GQVK…GESE and HSAP…TGSL. Residues 1936 to 1946 are compositionally biased toward basic and acidic residues; the sequence is QVKEQDSQARE. Residues 1947–1968 are compositionally biased toward acidic residues; the sequence is ETDEEEEDKEKDEEEEGMGESE. The segment covering 2028–2037 has biased composition (polar residues); it reads SQFSQESEGA. Residues C2155, C2158, C2184, and C2187 each coordinate Zn(2+). The CysA-type zinc-finger motif lies at 2155–2187; the sequence is CHSCNFCRDLDLCKDSSFSQDGAILPQWLCSNC. [4Fe-4S] cluster-binding residues include C2218, C2221, C2233, and C2235. A CysB motif motif is present at residues 2218-2235; sequence CLKCRGMKETHMPVYCSC.

Belongs to the DNA polymerase type-B family. As to quaternary structure, component of the DNA polymerase epsilon complex consisting of four subunits: the catalytic subunit POLE and the accessory subunits POLE2, POLE3 and POLE4. Interacts with RAD17 and TOPBP1. It depends on [4Fe-4S] cluster as a cofactor.

It is found in the nucleus. It carries out the reaction DNA(n) + a 2'-deoxyribonucleoside 5'-triphosphate = DNA(n+1) + diphosphate. Catalytic component of the DNA polymerase epsilon complex. Participates in chromosomal DNA replication. Required during synthesis of the leading DNA strands at the replication fork and binds at/or near replication origins and moves along DNA with the replication fork. Has 3'-5' proofreading exonuclease activity that corrects errors arising during DNA replication. It is also involved in DNA synthesis during DNA repair. This is DNA polymerase epsilon catalytic subunit A (Pole) from Mus musculus (Mouse).